The primary structure comprises 124 residues: Small ribosomal subunit protein uS13 (124 aa).

The disordered stretch occupies residues 98–124; sequence VRGQRTKTNARTRKGPKRTIAGKKKAR.

Belongs to the universal ribosomal protein uS13 family. Part of the 30S ribosomal subunit. Forms a loose heterodimer with protein S19. Forms two bridges to the 50S subunit in the 70S ribosome.

Located at the top of the head of the 30S subunit, it contacts several helices of the 16S rRNA. In the 70S ribosome it contacts the 23S rRNA (bridge B1a) and protein L5 of the 50S subunit (bridge B1b), connecting the 2 subunits; these bridges are implicated in subunit movement. Contacts the tRNAs in the A and P-sites. The polypeptide is Small ribosomal subunit protein uS13 (Mycobacterium leprae (strain Br4923)).